The following is a 298-amino-acid chain: Short-chain dehydrogenase reductase 4 (298 aa).

Position 50-74 (50-74) interacts with NAD(+); sequence IITGGASGIGAEAVRLFTDHGAKVV. Position 182 (Ser182) interacts with substrate. Catalysis depends on Tyr195, which acts as the Proton acceptor.

This sequence belongs to the short-chain dehydrogenases/reductases (SDR) family.

This chain is Short-chain dehydrogenase reductase 4 (SDR4), found in Arabidopsis thaliana (Mouse-ear cress).